The primary structure comprises 95 residues: Protein NCBP2AS2 homolog (95 aa).

The protein is Protein NCBP2AS2 homolog of Ixodes scapularis (Black-legged tick).